Consider the following 144-residue polypeptide: Probable DNA-directed RNA polymerases I and III subunit RPAC2 (144 aa).

Residues 14–47 are disordered; sequence KVEAETMEVDEQPQETPQVDDEEDLNVPSKKKME. Acidic residues predominate over residues 18 to 38; sequence ETMEVDEQPQETPQVDDEEDL.

This sequence belongs to the archaeal Rpo11/eukaryotic RPB11/RPC19 RNA polymerase subunit family. Component of the RNA polymerase I (Pol I) and RNA polymerase III (Pol III) complexes consisting of at least 13 and 17 subunits, respectively.

It localises to the nucleus. DNA-dependent RNA polymerase catalyzes the transcription of DNA into RNA using the four ribonucleoside triphosphates as substrates. Common core component of RNA polymerases I and III which synthesize ribosomal RNA precursors and small RNAs, such as 5S rRNA and tRNAs, respectively. The polypeptide is Probable DNA-directed RNA polymerases I and III subunit RPAC2 (rpac-19) (Caenorhabditis elegans).